We begin with the raw amino-acid sequence, 117 residues long: MGNSFRVDRVGMEIKREVNEILQKKVRDPRVQNVTITDVQMLGDLSAAKVFYTIHSTLASDNQKAQTGLEKATGTIKRELGKNLTMYKIPDLIFIKDESIEYGNKIDEMLRNLERKD.

It belongs to the RbfA family. As to quaternary structure, monomer. Binds 30S ribosomal subunits, but not 50S ribosomal subunits or 70S ribosomes.

It is found in the cytoplasm. One of several proteins that assist in the late maturation steps of the functional core of the 30S ribosomal subunit. Associates with free 30S ribosomal subunits (but not with 30S subunits that are part of 70S ribosomes or polysomes). Required for efficient processing of 16S rRNA. May interact with the 5'-terminal helix region of 16S rRNA. In Streptococcus thermophilus (strain CNRZ 1066), this protein is Ribosome-binding factor A.